Here is a 608-residue protein sequence, read N- to C-terminus: Isoprene synthase, chloroplastic (608 aa).

The transit peptide at 1-45 (MATNLLCLSNKLSSPTPTPSTRFPQSKNFITQKTSLANPKPWRVI) directs the protein to the chloroplast. Residue aspartate 350 participates in dimethylallyl diphosphate binding. Aspartate 350 and aspartate 354 together coordinate Mg(2+). Positions 350 to 354 (DDVYD) match the DDXXD motif motif. Glutamate 428, arginine 494, and asparagine 497 together coordinate dimethylallyl diphosphate. Asparagine 497, threonine 501, and glutamate 505 together coordinate Mg(2+).

It belongs to the terpene synthase family. Tpsb subfamily. It depends on Mg(2+) as a cofactor. Requires Mn(2+) as cofactor.

Its subcellular location is the plastid. It localises to the chloroplast. It carries out the reaction dimethylallyl diphosphate = isoprene + diphosphate. Its function is as follows. Lyase that catalyzes the formation of isoprene from dimethylallyl diphosphate. This is Isoprene synthase, chloroplastic (ISPS) from Pueraria montana var. lobata (Kudzu vine).